Consider the following 3461-residue polypeptide: Reelin (3461 aa).

The first 26 residues, 1–26 (MERGCWAPRALVLAVLLLLATLRARA), serve as a signal peptide directing secretion. The region spanning 27 to 191 (ATGYYPRFSP…GAPTEATAYS (165 aa)) is the Reelin domain. An intrachain disulfide couples Cys41 to Cys127. Asn141 is a glycosylation site (N-linked (GlcNAc...) asparagine). The cysteines at positions 155 and 179 are disulfide-linked. N-linked (GlcNAc...) asparagine glycosylation is found at Asn258, Asn290, and Asn306. Cys540 and Cys581 form a disulfide bridge. The BNR 1 repeat unit spans residues 593–604 (EFSTNHGRSWSL). Cys609 and Cys614 are joined by a disulfide. A glycan (N-linked (GlcNAc...) asparagine) is linked at Asn629. An EGF-like 1 domain is found at 671–702 (IGPSCLKFCSGRGQCTRHGCKCDPGFSGPACE). Intrachain disulfides connect Cys675-Cys685 and Cys692-Cys701. Residues 799 to 810 (HYSYDNGITWKL) form a BNR 2 repeat. The cysteines at positions 895 and 937 are disulfide-linked. The BNR 3 repeat unit spans residues 952–963 (EYSANHGLTWHL). Cystine bridges form between Cys968–Cys975, Cys1034–Cys1044, and Cys1051–Cys1060. Residues 1030-1061 (IGQQCPNMCSGHGSCDHGVCRCDQGYQGTECH) form the EGF-like 2 domain. The stretch at 1157–1168 (QYSNNGGIQWHL) is one BNR 4 repeat. N-linked (GlcNAc...) asparagine glycosylation is present at Asn1267. Residues 1323 to 1334 (QYSHDAGMSWFL) form a BNR 5 repeat. Cystine bridges form between Cys1339-Cys1348, Cys1413-Cys1423, Cys1417-Cys1428, and Cys1430-Cys1441. The region spanning 1409–1442 (ISEPCPSYCSGHGDCISGVCFCDLGYTAAQGTCV) is the EGF-like 3 domain. Asn1447 carries N-linked (GlcNAc...) asparagine glycosylation. Cys1475 and Cys1522 are oxidised to a cystine. One copy of the BNR 6 repeat lies at 1535 to 1546 (QYSNDNGILWHL). N-linked (GlcNAc...) asparagine glycosylation occurs at Asn1600. Cys1633 and Cys1673 are oxidised to a cystine. Residues 1686 to 1697 (QYSLNNGKDWQL) form a BNR 7 repeat. A disulfide bridge links Cys1702 with Cys1709. The N-linked (GlcNAc...) asparagine glycan is linked to Asn1750. Residues 1765–1796 (LASGCPWMCSGRGICDSGRCVCDRGFGGPFCV) form the EGF-like 4 domain. The stretch at 1884 to 1895 (QFSVSGGVTWHL) is one BNR 8 repeat. Asn1921 carries an N-linked (GlcNAc...) asparagine glycan. The cysteines at positions 1983 and 2030 are disulfide-linked. Residues 2043–2054 (EFSRDFGATWHL) form a BNR 9 repeat. A disulfide bridge links Cys2059 with Cys2070. Zn(2+)-binding residues include His2061 and His2074. Residues 2129-2161 (IGPQCEEMCYGHGSCINGTKCICDPGYSGPTCK) form the EGF-like 5 domain. 3 cysteine pairs are disulfide-bonded: Cys2133-Cys2143, Cys2137-Cys2149, and Cys2151-Cys2160. Asn2145 carries an N-linked (GlcNAc...) asparagine glycan. Glu2179 contributes to the Zn(2+) binding site. The cysteines at positions 2195 and 2235 are disulfide-linked. A BNR 10 repeat occupies 2250 to 2261 (QYSLNGGLSWSL). Glu2264 serves as a coordination point for Zn(2+). Asn2269 and Asn2317 each carry an N-linked (GlcNAc...) asparagine glycan. Intrachain disulfides connect Cys2348/Cys2387, Cys2393/Cys2559, Cys2482/Cys2492, Cys2486/Cys2497, Cys2499/Cys2508, and Cys2544/Cys2584. Residues Glu2397, Glu2399, and His2460 each contribute to the Zn(2+) site. The stretch at 2399–2410 (EYSVDLGLSWHP) is one BNR 11 repeat. The EGF-like 6 domain maps to 2478 to 2509 (IGDGCLDMCSGHGRCVQGSCVCDEQWGGLYCD). The N-linked (GlcNAc...) asparagine glycan is linked to Asn2569. BNR repeat units lie at residues 2598-2609 (EYSVNGGITWNL) and 2778-2789 (QFSTDFGVSWSY). A disulfide bridge links Cys2794 with Cys2801. An EGF-like 7 domain is found at 2853-2884 (LGPGCLDNCGGHGDCLKEQCICDPGYSGPNCY). Cys2919 and Cys2966 are joined by a disulfide. Asn2962 carries an N-linked (GlcNAc...) asparagine glycan. A BNR 14 repeat occupies 2979–2990 (DFSTDGGITWTL). N-linked (GlcNAc...) asparagine glycans are attached at residues Asn3016 and Asn3073. Residues 3143–3155 (EYTKDARSDSWQL) form a BNR 15 repeat. A disulfide bond links Cys3160 and Cys3170. Asn3185 carries N-linked (GlcNAc...) asparagine glycosylation. Positions 3228–3260 (IGEACPKLCSGHGYCTTGAVCICDESFQGDDCS) constitute an EGF-like 8 domain. 4 disulfides stabilise this stretch: Cys3232-Cys3242, Cys3236-Cys3248, Cys3250-Cys3259, and Cys3296-Cys3346. One copy of the BNR 16 repeat lies at 3363–3374 (QYSVNNGITWHV). N-linked (GlcNAc...) asparagine glycans are attached at residues Asn3412 and Asn3439.

The protein belongs to the reelin family. Oligomer of disulfide-linked homodimers. N-glycosylated and to a lesser extent also O-glycosylated. The major isoform 1 is neuron-specific. It is abundantly produced during brain ontogenesis by the Cajal-Retzius cells and other pioneer neurons located in the telencephalic marginal zone and by granule cells of the external granular layer of the cerebellum. Expression is located in deeper layers in the developing hippocampus and olfactory bulb, low levels of expression are also detected in the immature striatum. At early developmental stages, expressed also in hypothalamic differentiation fields, tectum and spinal cord. A moderate to low level of expression occurs in the septal area, striatal fields, habenular nuclei, some thalamic nuclei, particularly the lateral geniculate, the retina and some nuclei of the reticular formation in the central field of the medulla. Very low levels found in liver and kidney. No expression in radial glial cells, cortical plate, Purkinje cells and inferior olivary neurons. The minor isoform 2 is only expressed in non neuronal cells. The minor isoform 3 is found in the same cells as isoform 1, but is almost undetectable in retina and brain stem.

The protein localises to the secreted. The protein resides in the extracellular space. It is found in the extracellular matrix. Functionally, extracellular matrix serine protease secreted by pioneer neurons that plays a role in layering of neurons in the cerebral cortex and cerebellum by coordinating cell positioning during neurodevelopment. Regulates microtubule function in neurons and neuronal migration. Binding to the extracellular domains of lipoprotein receptors VLDLR and LRP8/APOER2 induces tyrosine phosphorylation of DAB1 and modulation of TAU phosphorylation. Affects migration of sympathetic preganglionic neurons in the spinal cord, where it seems to act as a barrier to neuronal migration. Enzymatic activity is important for the modulation of cell adhesion. This Mus musculus (Mouse) protein is Reelin (Reln).